A 371-amino-acid polypeptide reads, in one-letter code: tRNA (guanine(26)-N(2))-dimethyltransferase (371 aa).

In terms of domain architecture, Trm1 methyltransferase spans 4-368 (VEVTEGRTRF…APLPVLEKVV (365 aa)). S-adenosyl-L-methionine contacts are provided by Arg-41, Arg-66, Asp-82, Asp-108, and Ala-109. 4 residues coordinate Zn(2+): Cys-237, Cys-240, Cys-256, and Cys-259.

This sequence belongs to the class I-like SAM-binding methyltransferase superfamily. Trm1 family.

It carries out the reaction guanosine(26) in tRNA + 2 S-adenosyl-L-methionine = N(2)-dimethylguanosine(26) in tRNA + 2 S-adenosyl-L-homocysteine + 2 H(+). In terms of biological role, dimethylates a single guanine residue at position 26 of a number of tRNAs using S-adenosyl-L-methionine as donor of the methyl groups. In Methanoculleus marisnigri (strain ATCC 35101 / DSM 1498 / JR1), this protein is tRNA (guanine(26)-N(2))-dimethyltransferase.